Reading from the N-terminus, the 109-residue chain is UPF0122 protein Cbei_1174 (109 aa).

This sequence belongs to the UPF0122 family.

In terms of biological role, might take part in the signal recognition particle (SRP) pathway. This is inferred from the conservation of its genetic proximity to ftsY/ffh. May be a regulatory protein. The sequence is that of UPF0122 protein Cbei_1174 from Clostridium beijerinckii (strain ATCC 51743 / NCIMB 8052) (Clostridium acetobutylicum).